The primary structure comprises 57 residues: Small ribosomal subunit protein bS21 (57 aa).

Belongs to the bacterial ribosomal protein bS21 family.

In Phytoplasma australiense, this protein is Small ribosomal subunit protein bS21.